Consider the following 89-residue polypeptide: Small ribosomal subunit protein uS15 (89 aa).

The protein belongs to the universal ribosomal protein uS15 family. Part of the 30S ribosomal subunit. Forms a bridge to the 50S subunit in the 70S ribosome, contacting the 23S rRNA.

Functionally, one of the primary rRNA binding proteins, it binds directly to 16S rRNA where it helps nucleate assembly of the platform of the 30S subunit by binding and bridging several RNA helices of the 16S rRNA. In terms of biological role, forms an intersubunit bridge (bridge B4) with the 23S rRNA of the 50S subunit in the ribosome. This is Small ribosomal subunit protein uS15 from Polynucleobacter necessarius subsp. necessarius (strain STIR1).